We begin with the raw amino-acid sequence, 488 residues long: Inosine-5'-monophosphate dehydrogenase (488 aa).

CBS domains lie at 95–153 (VISN…SIKI) and 157–216 (MTQE…AKDE). NAD(+) contacts are provided by residues Asp-250 and 300–302 (GIG). Residues Gly-302 and Gly-304 each coordinate K(+). IMP is bound at residue Ser-305. Cys-307 provides a ligand contact to K(+). Cys-307 serves as the catalytic Thioimidate intermediate. IMP is bound by residues 340–342 (DGG), 363–364 (GS), and 387–391 (YRGMG). Arg-403 functions as the Proton acceptor in the catalytic mechanism. An IMP-binding site is contributed by Glu-417. The tract at residues 468 to 488 (GLAESHPHNIQITKESPNYSF) is disordered. 3 residues coordinate K(+): Glu-471, Ser-472, and His-473. Residues 475-488 (HNIQITKESPNYSF) are compositionally biased toward polar residues.

The protein belongs to the IMPDH/GMPR family. In terms of assembly, homotetramer. K(+) serves as cofactor.

It carries out the reaction IMP + NAD(+) + H2O = XMP + NADH + H(+). The protein operates within purine metabolism; XMP biosynthesis via de novo pathway; XMP from IMP: step 1/1. Its activity is regulated as follows. Mycophenolic acid (MPA) is a non-competitive inhibitor that prevents formation of the closed enzyme conformation by binding to the same site as the amobile flap. In contrast, mizoribine monophosphate (MZP) is a competitive inhibitor that induces the closed conformation. MPA is a potent inhibitor of mammalian IMPDHs but a poor inhibitor of the bacterial enzymes. MZP is a more potent inhibitor of bacterial IMPDH. Catalyzes the conversion of inosine 5'-phosphate (IMP) to xanthosine 5'-phosphate (XMP), the first committed and rate-limiting step in the de novo synthesis of guanine nucleotides, and therefore plays an important role in the regulation of cell growth. This Staphylococcus aureus (strain Mu50 / ATCC 700699) protein is Inosine-5'-monophosphate dehydrogenase.